A 576-amino-acid chain; its full sequence is Arginine--tRNA ligase (576 aa).

The 'HIGH' region signature appears at Ala126–His136.

Belongs to the class-I aminoacyl-tRNA synthetase family. As to quaternary structure, monomer.

The protein resides in the cytoplasm. The catalysed reaction is tRNA(Arg) + L-arginine + ATP = L-arginyl-tRNA(Arg) + AMP + diphosphate. The sequence is that of Arginine--tRNA ligase from Rickettsia typhi (strain ATCC VR-144 / Wilmington).